A 557-amino-acid polypeptide reads, in one-letter code: MARHGKGPKTNKKKLAPEKERFIQCCADITLELTDSLTSGTTREINLNGLITKYSKKYKLKQQPRLTDIINSIPDQYKKYLLPKLKAKPVRTASGIAVVAVMCKPHRCPHIAYTGNICVYCPGGPDSDFEYSTQSYTGYEPTSMRAIRARYDPYEQARGRVEQLKQLGHSIDKVEYVLMGGTFMSLPKEYREDFIVKLHNALSGFNGNDIDEAILYSQQSLTKCVGITIETRPDYCTQTHLDDMLKYGCTRLEIGVQSLYEDVARDTNRGHTVRSVCETFAVSKDAGYKVVSHMMPDLPNVGMERDIEQFKEYFENPDFRTDGLKIYPTLVIRGTGLYELWKTGRYKSYSANALVDLVARILALVPPWTRIYRVQRDIPMPLVTSGVDNGNLRELALARMKDLGTTCRDVRTREVGIQEVHHKVQPDQVELIRRDYYANGGWETFLSYEDPKKDILIGLLRLRKASKKYTYRKEFTSQRTSIVRELHVYGSVVPLHSRDPRKFQHQGFGTLLMEEAERIAKEEHGSEKISVISGVGVRNYYGKLGYELDGPYMSKRI.

One can recognise a Radical SAM core domain in the interval Arg91–Pro381. [4Fe-4S] cluster-binding residues include Cys108, Cys118, and Cys121. Lys173 serves as a coordination point for acetyl-CoA. The N-acetyltransferase domain maps to Thr405–Ile557. Residue Lys453 forms a Glycyl lysine isopeptide (Lys-Gly) (interchain with G-Cter in ubiquitin) linkage. Acetyl-CoA contacts are provided by residues Glu485 to Val488, Phe508 to Thr510, and Tyr541.

Belongs to the ELP3 family. As to quaternary structure, component of the elongator complex which consists of ELP1/IKI3, ELP2, ELP3, ELP4, ELP5/IKI1 and ELP6. The elongator complex is composed of two copies of the Elp123 subcomplex (composed of ELP1/IKI3, ELP2 and ELP3) and two copies of the Elp456 subcomplex (composed of ELP4, ELP5/IKI1 and ELP6). The Elp123 subcomplex forms a two-lobed scaffold, which binds the Elp456 subcomplex asymmetrically. In each lobe, ELP2 is tightly sandwiched between ELP1/IKI3 and ELP3. The Elp123 subcomplex binds tRNA through ELP1/IKI3 and ELP3 and can bind 2 tRNAs simultaneously. tRNA-binding induces conformational rearrangements which precisely position the targeted anticodon base in the active site. ELP3 interacts with KTI11/DPH3. ELP3 interacts with KTI12. The Elp456 subcomplex binds tRNA and has ATPase activity. It depends on [4Fe-4S] cluster as a cofactor.

It localises to the cytoplasm. The protein resides in the nucleus. It carries out the reaction uridine(34) in tRNA + acetyl-CoA + S-adenosyl-L-methionine + H2O = 5-(carboxymethyl)uridine(34) in tRNA + 5'-deoxyadenosine + L-methionine + CoA + 2 H(+). The protein operates within tRNA modification; 5-methoxycarbonylmethyl-2-thiouridine-tRNA biosynthesis. Functionally, catalytic tRNA acetyltransferase subunit of the elongator complex which is required for multiple tRNA modifications, including mcm5U (5-methoxycarbonylmethyl uridine), mcm5s2U (5-methoxycarbonylmethyl-2-thiouridine), and ncm5U (5-carbamoylmethyl uridine). In the elongator complex, acts as a tRNA uridine(34) acetyltransferase, which mediates formation of carboxymethyluridine in the wobble base at position 34 in tRNAs. The complex functions as a gamma-toxin target (TOT); disruption of the complex confers resistance to Kluyveromyces lactis toxin zymocin (pGKL1 killer toxin). May also be involved in sensitivity to Pichia inositovora toxin. Independently, ELP3 may be involved in polarized exocytosis. In Saccharomyces cerevisiae (strain ATCC 204508 / S288c) (Baker's yeast), this protein is Elongator complex protein 3.